The sequence spans 1059 residues: Tyrosine-protein kinase-like otk (1059 aa).

A signal peptide spans 1–23; it reads MDMLMMWSICLFVCIFMAPFSCG. At 24 to 597 the chain is on the extracellular side; sequence SGSSSRFIQV…GDGGFLATRA (574 aa). 5 Ig-like C2-type domains span residues 28 to 112, 113 to 202, 258 to 377, 380 to 475, and 480 to 570; these read SRFI…REAS, PTAK…RVMS, PEGL…LAIN, PGIL…VSIN, and PKFS…AVLT. Asparagine 42 carries N-linked (GlcNAc...) asparagine glycosylation. 4 disulfides stabilise this stretch: cysteine 49–cysteine 99, cysteine 141–cysteine 191, cysteine 283–cysteine 366, and cysteine 411–cysteine 459. Asparagine 348, asparagine 429, asparagine 441, asparagine 456, asparagine 469, asparagine 524, and asparagine 536 each carry an N-linked (GlcNAc...) asparagine glycan. Cysteine 502 and cysteine 554 are disulfide-bonded. The chain crosses the membrane as a helical span at residues 598-618; it reads VLITMTVALAYIVLVVGLMLW. Residues 619 to 1059 are Cytoplasmic-facing; it reads CRYRRQARKA…ALSKAMQNSE (441 aa). A disordered region spans residues 639–695; sequence GGEQAGGEGSTSGNPKASEQEPCLGKQQRNGRNGKSKSNGDPQKSDDTACSQQSRAS. Polar residues predominate over residues 665 to 693; that stretch reads QQRNGRNGKSKSNGDPQKSDDTACSQQSR. The residue at position 698 (serine 698) is a Phosphoserine. The region spanning 712–1055 is the Protein kinase; inactive domain; it reads LSELIQIGRG…QLGAALSKAM (344 aa). A disordered region spans residues 739–781; sequence AQANDKDSDNDKQHSNSENGSGGSSGSTTLSTLNEKRRSKTSM. A compositionally biased stretch (basic and acidic residues) spans 742 to 753; the sequence is NDKDSDNDKQHS.

Belongs to the protein kinase superfamily. Tyr protein kinase family. Insulin receptor subfamily. Interacts with plexA; component of a receptor complex that mediates the repulsive signaling in response to Semaphorin ligands.

It localises to the cell membrane. Functionally, acts as a calcium-dependent, homophilic cell adhesion molecule that regulates neural recognition during the development of the nervous system. Component of the repulsive Plexin signaling response to regulate motor axon guidance at the embryonic stage. Also component of a receptor complex that is required in the adult visual system to innervate the lamina layer; specific targeting of R1-R6 axons. This Drosophila willistoni (Fruit fly) protein is Tyrosine-protein kinase-like otk.